Consider the following 429-residue polypeptide: Cytochrome P450 BJ-3 (429 aa).

Cysteine 376 serves as a coordination point for heme.

Belongs to the cytochrome P450 family. The cofactor is heme.

In terms of biological role, cytochromes P450 are a group of heme-thiolate monooxygenases. They oxidize a variety of structurally unrelated compounds, including steroids, fatty acids, and xenobiotics. This Bradyrhizobium diazoefficiens (strain JCM 10833 / BCRC 13528 / IAM 13628 / NBRC 14792 / USDA 110) protein is Cytochrome P450 BJ-3 (cyp114).